The chain runs to 185 residues: NEDD8-conjugating enzyme UBE2F (185 aa).

An N-acetylmethionine modification is found at Met1. Residues 1 to 29 form an interaction with UBA3 region; it reads MLTLASKLKRDDGLKGSRTAATASDSTRR. Residues 32-185 enclose the UBC core domain; it reads VRDKLLVKEV…VDDYIKRYAR (154 aa). The active-site Glycyl thioester intermediate is the Cys116.

The protein belongs to the ubiquitin-conjugating enzyme family. UBE2F subfamily. In terms of assembly, interacts with UBA3 and RBX2. Interacts (N-terminally acetylated form) with (via DCUN1 domain) DCUN1D1, DCUN1D2, DCUN1D3, DCUN1D4 and DCUN1D5. Post-translationally, the acetylation of Met-1 increases affinity for DCUN1D3 by about 2 orders of magnitude and is crucial for NEDD8 transfer to cullins. Widely expressed (at protein level).

It catalyses the reaction [E1 NEDD8-activating enzyme]-S-[NEDD8 protein]-yl-L-cysteine + [E2 NEDD8-conjugating enzyme]-L-cysteine = [E1 NEDD8-activating enzyme]-L-cysteine + [E2 NEDD8-conjugating enzyme]-S-[NEDD8-protein]-yl-L-cysteine.. It functions in the pathway protein modification; protein neddylation. Accepts the ubiquitin-like protein NEDD8 from the UBA3-NAE1 E1 complex and catalyzes its covalent attachment to other proteins. Together with the E3 ubiquitin ligase RNF7/RBX2, specifically neddylates cullin-5 (CUL5). Does not neddylate CUL1, CUL2, CUL3, CUL4A or CUL4B. Mediates neddylation of the CUL9-RBX1 complex. Its function is as follows. (Microbial infection) Following infection by HIV-1 virus, participates to HIV-1 Vif protein-mediated ubiquitination and degradation of APOBEC3G by mediating neddylation of cullin-5 (CUL5). The protein is NEDD8-conjugating enzyme UBE2F (UBE2F) of Homo sapiens (Human).